Here is a 374-residue protein sequence, read N- to C-terminus: Chaperone protein DnaJ (374 aa).

Residues 5 to 70 (CYYEILNVSK…GKRSRYDQFG (66 aa)) form the J domain. The segment at 130-207 (GVEKEINIPR…CYGSGKIKKQ (78 aa)) adopts a CR-type zinc-finger fold. Residues Cys143, Cys146, Cys159, Cys162, Cys181, Cys184, Cys195, and Cys198 each coordinate Zn(2+). CXXCXGXG motif repeat units lie at residues 143-150 (CDSCDGTG), 159-166 (CHACHGQG), 181-188 (CPVCNGTG), and 195-202 (CDDCYGSG).

Belongs to the DnaJ family. Homodimer. Zn(2+) serves as cofactor.

The protein localises to the cytoplasm. In terms of biological role, participates actively in the response to hyperosmotic and heat shock by preventing the aggregation of stress-denatured proteins and by disaggregating proteins, also in an autonomous, DnaK-independent fashion. Unfolded proteins bind initially to DnaJ; upon interaction with the DnaJ-bound protein, DnaK hydrolyzes its bound ATP, resulting in the formation of a stable complex. GrpE releases ADP from DnaK; ATP binding to DnaK triggers the release of the substrate protein, thus completing the reaction cycle. Several rounds of ATP-dependent interactions between DnaJ, DnaK and GrpE are required for fully efficient folding. Also involved, together with DnaK and GrpE, in the DNA replication of plasmids through activation of initiation proteins. This is Chaperone protein DnaJ from Francisella philomiragia subsp. philomiragia (strain ATCC 25017 / CCUG 19701 / FSC 153 / O#319-036).